The primary structure comprises 213 residues: MIRVLVVDDHDLVRTGITRMLADIDGLQVVGQAESGEESLLKARELKPYVVLMDVKMPGIGGLEATRKLLRSHPDIKVVAVTVCEEDPFPTRLLQAGAAGYLTKGAGLNEMVQAIRLVFAGQRYISPQIAQQLVFKSFQPSSDSPFDALSEREIQIALMIVGCQKVQIISDKLCLSPKTVNTYRYRIFEKLSISSDVELTLLAVRHGMVDASL.

The Response regulatory domain occupies 3 to 119 (RVLVVDDHDL…EMVQAIRLVF (117 aa)). At Asp54 the chain carries 4-aspartylphosphate. One can recognise an HTH luxR-type domain in the interval 142–207 (SDSPFDALSE…ELTLLAVRHG (66 aa)). Residues 166–185 (VQIISDKLCLSPKTVNTYRY) constitute a DNA-binding region (H-T-H motif).

Post-translationally, phosphorylated by GacS.

Its function is as follows. Member of the two-component regulatory system GacA/GacS which controls the expression of secondary metabolites and extracellular products. Acts (probably primarily) by activating expression of CsrA1 and CsrA2 antagonist small RNAs (sRNA) RsmX, RsmY and RsmZ which bind to and prevent translation repression by CsrA1 and CsrA2. Involved in the regulation of secondary metabolism and in the synthesis of the antifungal factors cyanide, 2,4-diacetylphloroglucinol and pyoluteorin. Involved in synthesis of the autoinducing signal (unrelated to N-acylhomoserine lactones, induces the Gac/Csr cascade). Exercises positive post-transcriptional control over the hcnABC and aprA genes; acts upstream of CsrA2 (rsmA). Controls expression of csrA1 (rsmE) and csrA2. The sequence is that of Response regulator GacA from Pseudomonas protegens (strain DSM 19095 / LMG 27888 / CFBP 6595 / CHA0).